A 103-amino-acid chain; its full sequence is UPF0145 protein BCE_1095 (103 aa).

Belongs to the UPF0145 family.

This chain is UPF0145 protein BCE_1095, found in Bacillus cereus (strain ATCC 10987 / NRS 248).